The following is a 458-amino-acid chain: Glycine--tRNA ligase (458 aa).

Substrate-binding residues include R97 and E171. ATP contacts are provided by residues R203 to E205, F213 to F218, E287 to L288, and G331 to R334. Residue F218 to E222 coordinates substrate. E327–G331 serves as a coordination point for substrate.

The protein belongs to the class-II aminoacyl-tRNA synthetase family. In terms of assembly, homodimer.

It is found in the cytoplasm. The catalysed reaction is tRNA(Gly) + glycine + ATP = glycyl-tRNA(Gly) + AMP + diphosphate. Catalyzes the attachment of glycine to tRNA(Gly). The sequence is that of Glycine--tRNA ligase from Bacillus thuringiensis subsp. konkukian (strain 97-27).